The chain runs to 275 residues: C-type lectin domain family 12 member B (275 aa).

Topologically, residues 1 to 41 (MSDEVTYATLMLQDSARVRGNQDGNNLRKEGHPAQSSLWRG) are cytoplasmic. An ITIM motif motif is present at residues 5 to 10 (VTYATL). A Phosphotyrosine modification is found at Tyr7. A helical; Signal-anchor for type II membrane protein transmembrane segment spans residues 42–64 (AALSLMTLCLVLVTGLVTLATMF). The Extracellular portion of the chain corresponds to 65–275 (LQVSNDINSD…ASLVKTEDLD (211 aa)). Residues Asn91, Asn175, and Asn236 are each glycosylated (N-linked (GlcNAc...) asparagine). Residues 149-263 (YGNSCYYFSI…CSAEIPWICE (115 aa)) form the C-type lectin domain. Disulfide bonds link Cys171-Cys262 and Cys241-Cys254.

Homodimer. Interacts (via ITIM motif) with PTPN6. Interacts (via ITIM motif) with PTPN11; this interaction triggers dephosphorylation and activation of PTPN11.

The protein resides in the cell membrane. Its function is as follows. Inhibitory receptor postulated to negatively regulate immune and non-immune functions. Upon phosphorylation, recruits SH2 domain-containing PTPN6 and PTPN11 phosphatases to its ITIM motif and antagonizes activation signals. Although it inhibits KLRK1/NKG2D-mediated signaling, it does not bind known ligands of KLRK1/NKG2D and therefore is not its inhibitory counterpart. May limit activation of myeloid cell subsets in response to infection or tissue inflammation. May protect target cells against natural killer cell-mediated lysis. May negatively regulate cell cycle and differentiation of melanocytes via inactivation of STAT3. The polypeptide is C-type lectin domain family 12 member B (Clec12b) (Mus musculus (Mouse)).